A 396-amino-acid chain; its full sequence is Transcription factor IIIB 50 kDa subunit (396 aa).

The TFIIB-type zinc finger occupies 3 to 36; the sequence is GAKRCPDCGSSEIVEDAHYSQDQLVCADCGCILS. Zn(2+) is bound by residues Cys7, Cys10, Cys28, and Cys31. Residues 173 to 249 form repeat 2; the sequence is VKSHCRSFKL…SRRLSCSLSR (77 aa). Cysteine sulfenic acid (-SOH) is present on Cys342.

The protein belongs to the TFIIB family. Component of TFIIIB complexes. Interacts with TBP and forms a ternary complex with TBp and target DNA sequences. Post-translationally, in response to oxidative stress, a Cys-residue is reversibly oxidized to cysteine sulfenic acid. This impairs formation of a ternary complex with TBP and DNA and down-regulates expression of target genes in response to oxidative stress.

The protein localises to the nucleus. In terms of biological role, general activator of RNA polymerase III transcription. Factor exclusively required for RNA polymerase III transcription of genes with promoter elements upstream of the initiation sites. Contributes to the regulation of gene expression; functions as activator in the absence of oxidative stress. Down-regulates expression of target genes in response to oxidative stress. Overexpression protects cells against apoptosis in response to oxidative stress. The polypeptide is Transcription factor IIIB 50 kDa subunit (brf2) (Xenopus laevis (African clawed frog)).